We begin with the raw amino-acid sequence, 1009 residues long: DENN domain-containing protein 1A (1009 aa).

The region spanning 13–145 is the uDENN domain; the sequence is FEVYVEVAYP…HKLPIPDPGV (133 aa). The 137-residue stretch at 162–298 folds into the cDENN domain; that stretch reads ELPSIPENRN…VISSLKNRLK (137 aa). The dDENN domain occupies 300-378; that stretch reads VSTTTGDGVA…DGRLDLLNSG (79 aa). Residues 381 to 385 carry the FXDXF motif motif; the sequence is FSDVF. The disordered stretch occupies residues 453-564; sequence DIAENGCAPT…TGPVPAPPDR (112 aa). A Phosphoserine modification is found at Ser-473. Residues 477–489 are compositionally biased toward basic and acidic residues; it reads EAKDPKLREDRRP. Positions 500-509 are enriched in basic residues; sequence PRPHVVKRPK. A Phosphothreonine modification is found at Thr-519. Ser-520, Ser-523, Ser-536, Ser-538, and Ser-546 each carry phosphoserine. A Clathrin box motif is present at residues 569–578; sequence DLLEDVFSNL. Phosphoserine is present on Ser-592. Positions 648–714 are disordered; that stretch reads IPSKPPAASP…RKTPELGIVP (67 aa). Ser-749 is modified (phosphoserine). Disordered regions lie at residues 796–831 and 928–1009; these read STLPSRPATPNVATPFTPQFSFPPAGTPTPFPQPPL and RSSA…ETFE. Composition is skewed to pro residues over residues 820-831 and 945-957; these read AGTPTPFPQPPL and GDPPLLPPRPPQG. The segment covering 972-983 has biased composition (basic and acidic residues); sequence DPFEDLLQKTKQ. Positions 986–997 are enriched in low complexity; the sequence is SPSPALAPAPDS. The segment covering 999 to 1009 has biased composition (basic and acidic residues); the sequence is EQLRKQWETFE.

In terms of assembly, interacts with RAB35. Interacts with clathrin and with the adapter protein complex 2, AP-2. Interacts with ITSN1 and SH3GL2. Interacts (when phosphorylated) with YWHAE. In terms of processing, phosphorylated on serine and/or threonine in an Akt-dependent manner. Phosphorylation probably regulates the guanine nucleotide exchange factor (GEF) activity, possibly by disrupting an intramolecular interaction between the DENN domain and the C-terminus of the protein, thereby relieving the autoinhibition.

The protein localises to the cytoplasmic vesicle. It localises to the clathrin-coated vesicle membrane. Its subcellular location is the presynaptic cell membrane. With respect to regulation, the guanine nucleotide exchange factor (GEF) activity is autoinhibited. Autoinhibition may be the result of intramolecular interaction between the DENN domain and the C-terminus, which is disrupted upon phosphorylation. Activation is regulated by Akt activation. Functionally, guanine nucleotide exchange factor (GEF) regulating clathrin-mediated endocytosis through RAB35 activation. Promotes the exchange of GDP to GTP, converting inactive GDP-bound RAB35 into its active GTP-bound form. Regulates clathrin-mediated endocytosis of synaptic vesicles and mediates exit from early endosomes. Binds phosphatidylinositol-phosphates (PtdInsPs), with some preference for PtdIns(3)P. This chain is DENN domain-containing protein 1A, found in Homo sapiens (Human).